A 548-amino-acid chain; its full sequence is Chaperonin GroEL (548 aa).

Residues 30-33 (TLGP), K51, 87-91 (DGTTT), G415, 479-481 (NAA), and D495 contribute to the ATP site.

The protein belongs to the chaperonin (HSP60) family. In terms of assembly, forms a cylinder of 14 subunits composed of two heptameric rings stacked back-to-back. Interacts with the co-chaperonin GroES.

The protein resides in the cytoplasm. It catalyses the reaction ATP + H2O + a folded polypeptide = ADP + phosphate + an unfolded polypeptide.. Its function is as follows. Together with its co-chaperonin GroES, plays an essential role in assisting protein folding. The GroEL-GroES system forms a nano-cage that allows encapsulation of the non-native substrate proteins and provides a physical environment optimized to promote and accelerate protein folding. This chain is Chaperonin GroEL, found in Klebsiella pneumoniae subsp. pneumoniae (strain ATCC 700721 / MGH 78578).